We begin with the raw amino-acid sequence, 408 residues long: BRCA1-A complex subunit Abraxas 1 (408 aa).

An MPN domain is found at 7 to 155; it reads TAVMSGFVFG…KSTHRLEYAL (149 aa). Residues 210 to 273 adopt a coiled-coil conformation; it reads ALAEVNRISN…EETGNKVSEA (64 aa). Positions 360–372 are enriched in polar residues; that stretch reads LQLQKQHSQNGDS. The tract at residues 360–408 is disordered; sequence LQLQKQHSQNGDSEGSDSERPLCNSGTETDGDILESLHMDVSRSKSPIF. Position 405 is a phosphoserine (Ser-405). Positions 405–408 match the pSXXF motif motif; it reads SPIF.

The protein belongs to the FAM175 family. Abraxas subfamily. In terms of assembly, component of the BRCA1-A complex. Component of the BRISC complex. Interacts directly (when phosphorylated at Ser-405) with brca1. Homodimer. The phosphorylated homodimer can interact directly with two brca1 chains, giving rise to a heterotetramer. In terms of processing, phosphorylation of Ser-405 of the pSXXF motif by ATM or ATR constitutes a specific recognition motif for the BRCT domain of BRCA1.

The protein resides in the nucleus. Functionally, involved in DNA damage response and double-strand break (DSB) repair. Component of the BRCA1-A complex, acting as a central scaffold protein that assembles the various components of the complex and mediates the recruitment of brca1. The BRCA1-A complex specifically recognizes 'Lys-63'-linked ubiquitinated histones H2A and H2AX at DNA lesion sites, leading to target the brca1-bard1 heterodimer to sites of DNA damage at DSBs. This complex also possesses deubiquitinase activity that specifically removes 'Lys-63'-linked ubiquitin on histones H2A and H2AX. The sequence is that of BRCA1-A complex subunit Abraxas 1 from Xenopus tropicalis (Western clawed frog).